Here is a 159-residue protein sequence, read N- to C-terminus: 2-C-methyl-D-erythritol 2,4-cyclodiphosphate synthase (159 aa).

2 residues coordinate a divalent metal cation: D8 and H10. 4-CDP-2-C-methyl-D-erythritol 2-phosphate-binding positions include 8–10 (DVH) and 34–35 (HS). H42 contributes to the a divalent metal cation binding site. 4-CDP-2-C-methyl-D-erythritol 2-phosphate contacts are provided by residues 56–58 (DIG), 61–65 (FPDTD), 100–106 (AQAPKMA), 132–135 (TTTE), F139, and R142.

This sequence belongs to the IspF family. In terms of assembly, homotrimer. The cofactor is a divalent metal cation.

The catalysed reaction is 4-CDP-2-C-methyl-D-erythritol 2-phosphate = 2-C-methyl-D-erythritol 2,4-cyclic diphosphate + CMP. It participates in isoprenoid biosynthesis; isopentenyl diphosphate biosynthesis via DXP pathway; isopentenyl diphosphate from 1-deoxy-D-xylulose 5-phosphate: step 4/6. Its function is as follows. Involved in the biosynthesis of isopentenyl diphosphate (IPP) and dimethylallyl diphosphate (DMAPP), two major building blocks of isoprenoid compounds. Catalyzes the conversion of 4-diphosphocytidyl-2-C-methyl-D-erythritol 2-phosphate (CDP-ME2P) to 2-C-methyl-D-erythritol 2,4-cyclodiphosphate (ME-CPP) with a corresponding release of cytidine 5-monophosphate (CMP). The protein is 2-C-methyl-D-erythritol 2,4-cyclodiphosphate synthase of Cronobacter sakazakii (strain ATCC BAA-894) (Enterobacter sakazakii).